Consider the following 370-residue polypeptide: Putative replication factor C small subunit L478 (370 aa).

41-48 (GPSGSGKK) contributes to the ATP binding site. Residues 342 to 353 (RNKEPEKSEKTK) show a composition bias toward basic and acidic residues. The tract at residues 342–370 (RNKEPEKSEKTKSKTGKLSRTNSKKTIKN) is disordered. The span at 354–370 (SKTGKLSRTNSKKTIKN) shows a compositional bias: basic residues.

Belongs to the activator 1 small subunits family. RfcS subfamily.

Its function is as follows. Part of the RFC clamp loader complex which loads the PCNA sliding clamp onto DNA. In Acanthamoeba polyphaga (Amoeba), this protein is Putative replication factor C small subunit L478.